Consider the following 357-residue polypeptide: MAPSHAVRCCQRGLSWIPVIFINLVVCWSYYAYVVELCIYTIPNVNEQVIYLVVFHAFFFMFMWSYWKTISSKPTNPSKEFCLPKAEKELYEKEERPEAQQDILKRVARELPIYTFTGSGAIRYCDRCQLIKPDRCHHCSTCDKCVLKMDHHCPWVNNCVGFSNYKFFVLFLAYSMLYCVYIAATVLQYFIKFWTNQLPDTHAKFHVLFLFFVAAMFFISILSLFSYHLWLVGKNRTTIEAFRAPVFRNGPDKNGFTLGFRKNITQVFGDQKKYWCLPIFSSLGDGYTFPTRLVTVDVEHGNIEHQTIKCTVDGQTNARPLSESQNHLLCNDEGQKDSSMAAIEVCQPVCVTLENES.

Topologically, residues 1–14 are cytoplasmic; it reads MAPSHAVRCCQRGL. The chain crosses the membrane as a helical span at residues 15-35; that stretch reads SWIPVIFINLVVCWSYYAYVV. Residues 36 to 50 lie on the Lumenal side of the membrane; sequence ELCIYTIPNVNEQVI. Residues 51–71 form a helical membrane-spanning segment; it reads YLVVFHAFFFMFMWSYWKTIS. Over 72–166 the chain is Cytoplasmic; the sequence is SKPTNPSKEF…NNCVGFSNYK (95 aa). One can recognise a DHHC domain in the interval 123–173; sequence RYCDRCQLIKPDRCHHCSTCDKCVLKMDHHCPWVNNCVGFSNYKFFVLFLA. Catalysis depends on C153, which acts as the S-palmitoyl cysteine intermediate. A helical membrane pass occupies residues 167 to 187; sequence FFVLFLAYSMLYCVYIAATVL. At 188-204 the chain is on the lumenal side; the sequence is QYFIKFWTNQLPDTHAK. A helical membrane pass occupies residues 205–228; it reads FHVLFLFFVAAMFFISILSLFSYH. The Cytoplasmic portion of the chain corresponds to 229-357; the sequence is LWLVGKNRTT…PVCVTLENES (129 aa).

Belongs to the DHHC palmitoyltransferase family.

It is found in the golgi apparatus membrane. It localises to the cell membrane. The protein localises to the cytoplasm. The protein resides in the perinuclear region. Its subcellular location is the endoplasmic reticulum membrane. It is found in the endoplasmic reticulum-Golgi intermediate compartment membrane. It carries out the reaction L-cysteinyl-[protein] + hexadecanoyl-CoA = S-hexadecanoyl-L-cysteinyl-[protein] + CoA. The catalysed reaction is L-cysteinyl-[protein] + tetradecanoyl-CoA = S-tetradecanoyl-L-cysteinyl-[protein] + CoA. It catalyses the reaction L-cysteinyl-[protein] + octadecanoyl-CoA = S-octadecanoyl-L-cysteinyl-[protein] + CoA. Functionally, palmitoyltransferase that could catalyze the addition of palmitate onto various protein substrates. Catalyzes palmitoylation of Cys residues on protein substrates and has a preference for acyl-CoA with C16 fatty acid chains but may also utilize acyl-CoA with C14 and C18 fatty acid chains. In Danio rerio (Zebrafish), this protein is Palmitoyltransferase ZDHHC20-A.